The following is a 185-amino-acid chain: Protein GrpE (185 aa).

Residues 1 to 37 (MEEQEEKQYNQNIQDNEEGTQMREELQESTSAQQTLQ) are disordered. Positions 28–37 (ESTSAQQTLQ) are enriched in polar residues.

It belongs to the GrpE family. In terms of assembly, homodimer.

It localises to the cytoplasm. In terms of biological role, participates actively in the response to hyperosmotic and heat shock by preventing the aggregation of stress-denatured proteins, in association with DnaK and GrpE. It is the nucleotide exchange factor for DnaK and may function as a thermosensor. Unfolded proteins bind initially to DnaJ; upon interaction with the DnaJ-bound protein, DnaK hydrolyzes its bound ATP, resulting in the formation of a stable complex. GrpE releases ADP from DnaK; ATP binding to DnaK triggers the release of the substrate protein, thus completing the reaction cycle. Several rounds of ATP-dependent interactions between DnaJ, DnaK and GrpE are required for fully efficient folding. The chain is Protein GrpE from Helicobacter hepaticus (strain ATCC 51449 / 3B1).